A 174-amino-acid chain; its full sequence is Probable E3 ubiquitin-protein ligase RHA4A (174 aa).

An RING-type; atypical zinc finger spans residues 105 to 147 (CCVCLGEFELKEELVEMPLCKHIFHLDCIHLWLYSHNTCPLCR). The tract at residues 155-174 (TKTSVDDDNDHPDSPQTSPV) is disordered.

In terms of tissue distribution, expressed in stems, flowers, cauline leaves and roots.

It carries out the reaction S-ubiquitinyl-[E2 ubiquitin-conjugating enzyme]-L-cysteine + [acceptor protein]-L-lysine = [E2 ubiquitin-conjugating enzyme]-L-cysteine + N(6)-ubiquitinyl-[acceptor protein]-L-lysine.. It functions in the pathway protein modification; protein ubiquitination. Probable E3 ubiquitin-protein ligase that may possess E3 ubiquitin ligase activity in vitro. The chain is Probable E3 ubiquitin-protein ligase RHA4A from Arabidopsis thaliana (Mouse-ear cress).